The chain runs to 837 residues: Protein translocase subunit SecA (837 aa).

ATP-binding positions include glutamine 85, 103 to 107 (GEGKT), and aspartate 493. Zn(2+) contacts are provided by cysteine 821, cysteine 823, cysteine 832, and histidine 833.

This sequence belongs to the SecA family. Monomer and homodimer. Part of the essential Sec protein translocation apparatus which comprises SecA, SecYEG and auxiliary proteins SecDF. Other proteins may also be involved. Zn(2+) serves as cofactor.

The protein localises to the cell membrane. It is found in the cytoplasm. It carries out the reaction ATP + H2O + cellular proteinSide 1 = ADP + phosphate + cellular proteinSide 2.. In terms of biological role, part of the Sec protein translocase complex. Interacts with the SecYEG preprotein conducting channel. Has a central role in coupling the hydrolysis of ATP to the transfer of proteins into and across the cell membrane, serving as an ATP-driven molecular motor driving the stepwise translocation of polypeptide chains across the membrane. This Streptococcus pneumoniae serotype 19F (strain G54) protein is Protein translocase subunit SecA.